The sequence spans 86 residues: MRSIMVQSAKTDSVNQQTIEGLKLQIKKLNSKAGQLKMDLHDLAEGLPIDYQNLTALAAETYEIYRHLDELKSQLKSLEKNHDMGY.

It belongs to the UPF0437 family.

The sequence is that of UPF0437 protein Ava_4254 from Trichormus variabilis (strain ATCC 29413 / PCC 7937) (Anabaena variabilis).